The following is a 145-amino-acid chain: Deoxyuridine 5'-triphosphate nucleotidohydrolase (145 aa).

Substrate-binding positions include 65–67, Asn78, 82–84, and Lys92; these read RSG and TID.

The protein belongs to the dUTPase family. The cofactor is Mg(2+).

The catalysed reaction is dUTP + H2O = dUMP + diphosphate + H(+). The protein operates within pyrimidine metabolism; dUMP biosynthesis; dUMP from dCTP (dUTP route): step 2/2. Its function is as follows. This enzyme is involved in nucleotide metabolism: it produces dUMP, the immediate precursor of thymidine nucleotides and it decreases the intracellular concentration of dUTP so that uracil cannot be incorporated into DNA. The protein is Deoxyuridine 5'-triphosphate nucleotidohydrolase of Syntrophomonas wolfei subsp. wolfei (strain DSM 2245B / Goettingen).